A 216-amino-acid polypeptide reads, in one-letter code: MOB kinase activator 3C (216 aa).

Zn(2+)-binding residues include C82, C87, H164, and H169.

The protein belongs to the MOB1/phocein family.

Functionally, may regulate the activity of kinases. This chain is MOB kinase activator 3C (MOB3C), found in Homo sapiens (Human).